A 30-amino-acid polypeptide reads, in one-letter code: Thrombin-like enzyme LmrSP-2 (30 aa).

This sequence belongs to the peptidase S1 family. Snake venom subfamily. In terms of tissue distribution, expressed by the venom gland.

It is found in the secreted. Thrombin-like snake venom serine protease that cleaves alpha-chain of fibrinogen (FGA) releases only fibrinopeptide A. Shows coagulant, esterase and amidase activities. The protein is Thrombin-like enzyme LmrSP-2 of Lachesis muta rhombeata (Bushmaster).